A 546-amino-acid polypeptide reads, in one-letter code: Chaperonin GroEL (546 aa).

Residues 30–33 (TLGP), lysine 51, 87–91 (DGTTT), glycine 415, 479–481 (NAA), and aspartate 495 contribute to the ATP site.

Belongs to the chaperonin (HSP60) family. Forms a cylinder of 14 subunits composed of two heptameric rings stacked back-to-back. Interacts with the co-chaperonin GroES.

The protein localises to the cytoplasm. The enzyme catalyses ATP + H2O + a folded polypeptide = ADP + phosphate + an unfolded polypeptide.. Together with its co-chaperonin GroES, plays an essential role in assisting protein folding. The GroEL-GroES system forms a nano-cage that allows encapsulation of the non-native substrate proteins and provides a physical environment optimized to promote and accelerate protein folding. This is Chaperonin GroEL from Paraburkholderia phytofirmans (strain DSM 17436 / LMG 22146 / PsJN) (Burkholderia phytofirmans).